The primary structure comprises 301 residues: tRNA dimethylallyltransferase (301 aa).

8–15 is a binding site for ATP; the sequence is GATGTGKS. Substrate is bound at residue 10 to 15; it reads TGTGKS. The tract at residues 33–36 is interaction with substrate tRNA; the sequence is DSMQ.

The protein belongs to the IPP transferase family. As to quaternary structure, monomer. It depends on Mg(2+) as a cofactor.

The catalysed reaction is adenosine(37) in tRNA + dimethylallyl diphosphate = N(6)-dimethylallyladenosine(37) in tRNA + diphosphate. Its function is as follows. Catalyzes the transfer of a dimethylallyl group onto the adenine at position 37 in tRNAs that read codons beginning with uridine, leading to the formation of N6-(dimethylallyl)adenosine (i(6)A). This is tRNA dimethylallyltransferase from Tropheryma whipplei (strain Twist) (Whipple's bacillus).